A 616-amino-acid polypeptide reads, in one-letter code: Dihydroxy-acid dehydratase (616 aa).

Aspartate 81 is a Mg(2+) binding site. Cysteine 122 contacts [2Fe-2S] cluster. Mg(2+) is bound by residues aspartate 123 and lysine 124. Lysine 124 bears the N6-carboxylysine mark. Residue cysteine 195 participates in [2Fe-2S] cluster binding. Residue glutamate 491 participates in Mg(2+) binding. Serine 517 functions as the Proton acceptor in the catalytic mechanism.

The protein belongs to the IlvD/Edd family. In terms of assembly, homodimer. It depends on [2Fe-2S] cluster as a cofactor. Mg(2+) is required as a cofactor.

The catalysed reaction is (2R)-2,3-dihydroxy-3-methylbutanoate = 3-methyl-2-oxobutanoate + H2O. The enzyme catalyses (2R,3R)-2,3-dihydroxy-3-methylpentanoate = (S)-3-methyl-2-oxopentanoate + H2O. It functions in the pathway amino-acid biosynthesis; L-isoleucine biosynthesis; L-isoleucine from 2-oxobutanoate: step 3/4. The protein operates within amino-acid biosynthesis; L-valine biosynthesis; L-valine from pyruvate: step 3/4. In terms of biological role, functions in the biosynthesis of branched-chain amino acids. Catalyzes the dehydration of (2R,3R)-2,3-dihydroxy-3-methylpentanoate (2,3-dihydroxy-3-methylvalerate) into 2-oxo-3-methylpentanoate (2-oxo-3-methylvalerate) and of (2R)-2,3-dihydroxy-3-methylbutanoate (2,3-dihydroxyisovalerate) into 2-oxo-3-methylbutanoate (2-oxoisovalerate), the penultimate precursor to L-isoleucine and L-valine, respectively. The protein is Dihydroxy-acid dehydratase of Klebsiella pneumoniae (strain 342).